A 446-amino-acid chain; its full sequence is MKFRSTALVKGFRQSAPYVNAHRDKTVVIMLGGEAIADPNFANIVNDIALLNSLGLRIVIVYGTRPQMRSLLKQTEHHAPFHKGIRITDEQTLELVKQIAGQLQLDITARLSMSLNNTPMAGAQINVISGNFVIAQPLGVDDGIDYCHSGRVRRIDTQGINRMLDQQSIVLLGPVASSVTGECFNLLSEDVATQLAIRLNADKLIGFCSEQGVLNEKGQILAELFPSEAEEILQRLEKELTPENGKLTGTMRFLKGAISACKAGVPRSHLISYKEDGALIQELFSFDGIGTQVVMASSEQVRDAEIDDIGGILDLIRPLEEEGILVRRSREQLEQEIAQFTIIEKDGLVIACAALYPFPEEGMAEMGCVAVHPDYRDGDRGVILLNRLRAKAKQYKLSQLFVLTTRSLHWFREQGFIEVDVSHLPMKKQKLYNFQRKSKILVLKGL.

Positions 299 to 431 constitute an N-acetyltransferase domain; the sequence is EQVRDAEIDD…SHLPMKKQKL (133 aa).

The protein belongs to the acetyltransferase family. ArgA subfamily.

Its subcellular location is the cytoplasm. The enzyme catalyses L-glutamate + acetyl-CoA = N-acetyl-L-glutamate + CoA + H(+). Its pathway is amino-acid biosynthesis; L-arginine biosynthesis; N(2)-acetyl-L-ornithine from L-glutamate: step 1/4. This is Amino-acid acetyltransferase from Aliivibrio fischeri (strain MJ11) (Vibrio fischeri).